We begin with the raw amino-acid sequence, 512 residues long: DEAD-box ATP-dependent RNA helicase 5 (512 aa).

Disordered regions lie at residues 1 to 33 and 45 to 76; these read MGRS…KLEA and ATST…GGGK. Residues 14–45 adopt a coiled-coil conformation; that stretch reads SRKSKKEKKSKKDKKRKLEAEAEVVVVEAAAA. The span at 16–30 shows a compositional bias: basic residues; sequence KSKKEKKSKKDKKRK. The Q motif signature appears at 94–120; sequence SSFAATALPPQVLDCCKGFERPSPIQA. Residues 123–300 form the Helicase ATP-binding domain; that stretch reads WPYLLDGRDF…QEFMDPNPIK (178 aa). 136–143 lines the ATP pocket; the sequence is AATGSGKT. The DEAD box signature appears at 248 to 251; that stretch reads DEAD. A Helicase C-terminal domain is found at 333–476; sequence LLDKYHKAQR…VVPPALTKFG (144 aa).

Belongs to the DEAD box helicase family. DDX5/DBP2 subfamily.

Its subcellular location is the nucleus. The protein resides in the nucleolus. The enzyme catalyses ATP + H2O = ADP + phosphate + H(+). In terms of biological role, ATP-dependent RNA helicase required for 60S ribosomal subunit synthesis. Involved in efficient pre-rRNA processing, predominantly at site A3, which is necessary for the normal formation of 25S and 5.8S rRNAs. The chain is DEAD-box ATP-dependent RNA helicase 5 from Oryza sativa subsp. japonica (Rice).